We begin with the raw amino-acid sequence, 998 residues long: Collagen alpha-1(I) chain (998 aa).

The tract at residues 1 to 998 (SYGYDEKGGV…GPPGPPGPPG (998 aa)) is disordered. A compositionally biased stretch (low complexity) spans 9-22 (GVSVPGPMGPSGPR). 11 positions are modified to 4-hydroxyproline: Pro25, Pro28, Pro30, Pro39, Pro42, Pro45, Pro59, Pro74, Pro80, Pro89, and Pro95. A compositionally biased stretch (basic and acidic residues) spans 62–76 (NGDDGEAGKPGRPGE). 5-hydroxylysine; alternate is present on Lys98. O-linked (Gal...) hydroxylysine; alternate glycosylation occurs at Lys98. Ser104 carries the phosphoserine modification. Residues 112–128 (DAGPAGPKGEPGSPGEN) show a composition bias toward low complexity. 4-hydroxyproline occurs at positions 122, 125, 131, 140, 146, 167, 176, 179, 206, 209, 221, 227, 236, 242, 245, and 260. A compositionally biased stretch (low complexity) spans 146-164 (PGASGPAGARGNDGATGAA). A compositionally biased stretch (pro residues) spans 166–178 (PPGPTGPAGPPGF). Low complexity predominate over residues 212–251 (AGAAGPAGNPGADGQPGAKGANGAPGIAGAPGFPGARGPS). Lys263 carries the 5-hydroxylysine modification. A 4-hydroxyproline mark is found at Pro269, Pro272, Pro284, Pro293, Pro308, Pro314, Pro323, and Pro329. Residues 318 to 327 (GERGGPGSRG) show a composition bias toward gly residues. Lys338 is subject to 5-hydroxylysine. A 4-hydroxyproline mark is found at Pro347, Pro356, Pro362, Pro368, Pro377, Pro380, Pro389, Pro398, Pro404, Pro416, Pro425, Pro434, Pro437, Pro455, Pro472, Pro478, Pro484, Pro490, Pro496, Pro502, Pro514, Pro523, Pro537, Pro543, and Pro552. Residues 371–397 (KGLTGSPGSPGPDGKTGPPGPAGQDGR) show a composition bias toward low complexity. The segment covering 406–425 (ARGQAGVMGFPGPKGAAGEP) has biased composition (low complexity). The span at 484–493 (PGEAGKPGEQ) shows a compositional bias: low complexity. Lys564 bears the 5-hydroxylysine mark. A 4-hydroxyproline mark is found at Pro570, Pro585, and Pro591. Positions 597 to 611 (SGPSGPAGPTGARGA) are enriched in low complexity. Phosphoserine is present on Ser600. 4-hydroxyproline occurs at positions 612, 618, 621, 630, 636, 654, 663, and 672. Residues 624-651 (AGFAGPPGADGQPGAKGEPGDAGAKGDA) are compositionally biased toward low complexity. Pro residues predominate over residues 653–665 (PPGPAGPTGPPGP). Position 675 is a 5-hydroxylysine (Lys675). Positions 680 to 696 (SAGPPGATGFPGAAGRV) are enriched in low complexity. Pro684 and Pro690 each carry 4-hydroxyproline. A 3-hydroxyproline modification is found at Pro698. 4-hydroxyproline occurs at positions 699, 708, 711, 732, 741, 749, 758, 776, 785, 788, 794, 809, 815, 821, 830, and 836. Residues 725–734 (ETGPAGRPGE) are compositionally biased toward low complexity. The segment covering 746–758 (KGSPGADGPAGAP) has biased composition (low complexity). Pro residues predominate over residues 808 to 818 (PPGPMGPPGLA). Residue Lys845 is modified to 5-hydroxylysine. Residues 853 to 868 (PGPPGAPGAPGAPGPV) show a composition bias toward pro residues. 3 positions are modified to 4-hydroxyproline: Pro856, Pro859, and Pro862. Residues 889-903 (AGPAGARGPAGPQGP) are compositionally biased toward low complexity. Positions 904–918 (RGDKGETGEQGDRGI) are enriched in basic and acidic residues. 5-hydroxylysine is present on Lys907. At Lys919 the chain carries 5-hydroxylysine; alternate. Lys919 carries O-linked (Gal...) hydroxylysine; alternate glycosylation. 4-hydroxyproline is present on residues Pro934, Pro937, Pro955, and Pro970. Over residues 937 to 970 (PGEQGPSGASGPAGPRGPPGSAGSPGKDGLNGLP) the composition is skewed to low complexity. Pro975 is modified (3-hydroxyproline). Position 976 is a 4-hydroxyproline (Pro976). The segment covering 988-998 (VGPPGPPGPPG) has biased composition (pro residues). A 3-hydroxyproline modification is found at Pro990. 4-hydroxyproline is present on Pro991. Pro993 bears the 3-hydroxyproline mark. 4-hydroxyproline is present on Pro994. Pro996 bears the 3-hydroxyproline mark. Pro997 bears the 4-hydroxyproline mark.

This sequence belongs to the fibrillar collagen family. Trimers of one alpha 2(I) and two alpha 1(I) chains. Post-translationally, contains mostly 4-hydroxyproline. Proline residues at the third position of the tripeptide repeating unit (G-X-Y) are hydroxylated in some or all of the chains. Contains 3-hydroxyproline at a few sites. This modification occurs on the first proline residue in the sequence motif Gly-Pro-Hyp, where Hyp is 4-hydroxyproline. In terms of processing, lysine residues at the third position of the tripeptide repeating unit (G-X-Y) are 5-hydroxylated in some or all of the chains. Post-translationally, O-glycosylated on hydroxylated lysine residues. The O-linked glycan consists of a Glc-Gal disaccharide. Expressed in bones.

Its subcellular location is the secreted. It is found in the extracellular space. The protein resides in the extracellular matrix. Type I collagen is a member of group I collagen (fibrillar forming collagen). This chain is Collagen alpha-1(I) chain, found in Nothrotheriops shastensis (Shasta ground sloth).